We begin with the raw amino-acid sequence, 302 residues long: Lipooligosaccharide biosynthesis protein lex-1 (302 aa).

7 consecutive repeat copies span residues 42–45 (SINQ), 46–49 (SINQ), 50–53 (SINQ), 54–57 (SINQ), 58–61 (SINQ), 62–65 (SINQ), and 66–69 (SINQ). Residues 42-69 (SINQSINQSINQSINQSINQSINQSINQ) form a 7 X 4 AA tandem repeats of S-I-N-Q region.

Belongs to the glycosyltransferase 25 family.

In terms of biological role, involved in extracellular lipooligosaccharide (LOS) biosynthesis and virulence expression. Involved in the synthesis of the oligosaccharide moiety of the LOS molecule by adding GalNAc. This Haemophilus influenzae (strain ATCC 51907 / DSM 11121 / KW20 / Rd) protein is Lipooligosaccharide biosynthesis protein lex-1 (lex1).